The primary structure comprises 162 residues: MSNCFFDVIANGQPLGRIVFKLFDDVVPKTAANFRALCTGEKGYGYAGSTFHRVIPQFMLQGGDFTRGNGTGGKSIYGEKFPDENFALKHNKPGLLSMANAGPNTNGSQFFITTVVTPWLDGKHVVFGEVTEGMDVVKKVESLGSNSGATRARIVIDKCGTV.

The 157-residue stretch at 5 to 161 (FFDVIANGQP…ARIVIDKCGT (157 aa)) folds into the PPIase cyclophilin-type domain.

This sequence belongs to the cyclophilin-type PPIase family. PPIase A subfamily.

Its subcellular location is the cytoplasm. It carries out the reaction [protein]-peptidylproline (omega=180) = [protein]-peptidylproline (omega=0). With respect to regulation, binds cyclosporin A (CsA). CsA mediates some of its effects via an inhibitory action on PPIase. PPIases accelerate the folding of proteins. It catalyzes the cis-trans isomerization of proline imidic peptide bonds in oligopeptides. The protein is Peptidyl-prolyl cis-trans isomerase (ppi1) of Schizosaccharomyces pombe (strain 972 / ATCC 24843) (Fission yeast).